A 385-amino-acid chain; its full sequence is Eukaryotic translation initiation factor 3 subunit M (385 aa).

The region spanning 180 to 342 is the PCI domain; it reads NSELASKVMI…RKVHISSTMH (163 aa).

The protein belongs to the eIF-3 subunit M family. Component of the eukaryotic translation initiation factor 3 (eIF-3) complex.

It is found in the cytoplasm. In terms of biological role, component of the eukaryotic translation initiation factor 3 (eIF-3) complex, which is involved in protein synthesis of a specialized repertoire of mRNAs and, together with other initiation factors, stimulates binding of mRNA and methionyl-tRNAi to the 40S ribosome. The eIF-3 complex specifically targets and initiates translation of a subset of mRNAs involved in cell proliferation. The polypeptide is Eukaryotic translation initiation factor 3 subunit M (Anopheles gambiae (African malaria mosquito)).